A 178-amino-acid chain; its full sequence is MNTPVSVNEKKDFVKWFLNNYQLKQRECVWILNYLMSHDQLMHKVHFVEHAKYCPRGLVMSANCVKDTPFHFFKQNVMTTDAEKSFHDIRLNRDEDIYIQLNFKSSFQNANYVAVLEENPYLPKHIEVNEKDRLLAERFLEESVFSFRRERLLKQIDEALDKQDKEAFHRLTAELKIL.

Belongs to the UPF0302 family.

This is UPF0302 protein BcerKBAB4_1445 from Bacillus mycoides (strain KBAB4) (Bacillus weihenstephanensis).